A 207-amino-acid polypeptide reads, in one-letter code: Protein phosphatase inhibitor 2 (207 aa).

Disordered stretches follow at residues 1 to 44 (MAAS…SKKS), 65 to 97 (LMKI…ALTP), and 110 to 146 (ESLE…EMKR). Position 2 is an N-acetylalanine (alanine 2). The interval 12–17 (KGILKN) is required for binding PPP1CC. The segment covering 19-28 (SSTTSSVVST) has biased composition (low complexity). The segment covering 35–44 (SVDEELSKKS) has biased composition (basic and acidic residues). Residues 43–55 (KSQKWDEMSILAT) form a required for binding PPP1CC region. Residue serine 44 is modified to Phosphoserine; by ATM. The residue at position 73 (threonine 73) is a Phosphothreonine; by GSK3. Residues 80-91 (ADDEDALSDSET) are compositionally biased toward acidic residues. Phosphoserine occurs at positions 87 and 89. Threonine 92 and threonine 96 each carry phosphothreonine. The span at 112–122 (LEPKYRVREQE) shows a compositional bias: basic and acidic residues. 4 positions are modified to phosphoserine: serine 123, serine 124, serine 129, and serine 132. Over residues 123–132 (SSGDEDSDLS) the composition is skewed to acidic residues. Basic and acidic residues predominate over residues 133–145 (PEEREKKRQFEMK). The segment at 149 to 152 (HYNE) is required for binding PPP1CC catalytic center, displacing metal ions and inhibition of PPP1CC catalytic activity. Positions 165–207 (KDLNDEEEDEEMSETAAGESMNMEESSQGSATSDQLQNKSQSS) are disordered. The segment covering 168–177 (NDEEEDEEMS) has biased composition (acidic residues). Polar residues predominate over residues 187–207 (MEESSQGSATSDQLQNKSQSS).

This sequence belongs to the protein phosphatase inhibitor 2 family. As to quaternary structure, heterodimer with PP1. Post-translationally, phosphorylation on Ser-44 by ATM activates PP1 by dissociating the PP1-PPP1R2 complex. Phosphorylation on Thr-73 by GSK3 activates PP1 by dissociating the PP1-PPP1R2 complex.

Inhibitor of protein-phosphatase 1. This is Protein phosphatase inhibitor 2 (PPP1R2) from Bos taurus (Bovine).